Consider the following 67-residue polypeptide: Conotoxin mr3d (67 aa).

The signal sequence occupies residues 1-19; sequence MSKLGILLTICLLLFPLTA. Residues 20-52 constitute a propeptide that is removed on maturation; it reads VPLDGDQPADRPAERMQDDISSEHHPFFDPVKR. 3 disulfide bridges follow: Cys53–Cys65, Cys54–Cys62, and Cys58–Cys66. At Pro64 the chain carries 4-hydroxyproline; partial. Cys66 is subject to Cysteine amide; partial.

It belongs to the conotoxin M superfamily. Has been found to be hydroxylated and amidated by Han et al. (2006), and to be unmodified by Ju et al. (2022). In terms of tissue distribution, expressed by the venom duct.

It is found in the secreted. The polypeptide is Conotoxin mr3d (Conus marmoreus (Marble cone)).